The sequence spans 269 residues: Growth-regulating factor 11 (269 aa).

A compositionally biased stretch (basic and acidic residues) spans 1–11 (MAAEGEAKKDS). Residues 1–71 (MAAEGEAKKD…GKEDVEEGGV (71 aa)) form a disordered region. Residues 43–52 (GEAGGGGGGG) show a composition bias toward gly residues. Acidic residues predominate over residues 58-68 (EEEEGKEDVEE). In terms of domain architecture, QLQ spans 114–149 (AFTAMQLQELEQQSRVYQYMAARVPVPTHLVFPIWK). Positions 180–224 (EPEPGRCRRTDGKKWRCWRNAIANEKYCERHMHRGRKRPVQLVVE) constitute a WRC domain. 2 consecutive short sequence motifs (bipartite nuclear localization signal) follow at residues 185-195 (RCRRTDGKKWR) and 213-217 (RGRKR). The interval 212-269 (HRGRKRPVQLVVEDDEPDSTSGSKPASGKATEGGKKTDDKSSSSKKLAVAAPAAVEST) is disordered. Positions 243–253 (EGGKKTDDKSS) are enriched in basic and acidic residues. Residues 255 to 269 (SKKLAVAAPAAVEST) show a composition bias toward low complexity.

This sequence belongs to the GRF family.

The protein localises to the nucleus. Transcription activator that plays a regulatory role in gibberellin-induced stem elongation. The protein is Growth-regulating factor 11 (GRF11) of Oryza sativa subsp. japonica (Rice).